The following is a 137-amino-acid chain: Hemoglobin subunit alpha-2 (137 aa).

The Globin domain maps to aspartate 1–arginine 137. Histidine 54 provides a ligand contact to O2. Histidine 83 provides a ligand contact to heme b.

This sequence belongs to the globin family. The N-terminus of the mature protein is acetylated. Red blood cells.

In Telmatobius peruvianus (Andean frog), this protein is Hemoglobin subunit alpha-2.